The primary structure comprises 439 residues: NAD kinase (439 aa).

Phosphoserine is present on residues Ser-46, Ser-48, Ser-50, Ser-55, and Ser-64.

It belongs to the NAD kinase family. A divalent metal cation serves as cofactor.

The enzyme catalyses NAD(+) + ATP = ADP + NADP(+) + H(+). The sequence is that of NAD kinase (Nadk) from Mus musculus (Mouse).